We begin with the raw amino-acid sequence, 350 residues long: Ubiquitin carboxyl-terminal hydrolase 11 (350 aa).

In terms of domain architecture, USP spans 49–344; that stretch reads KGLYNVSGND…SACLLFYEME (296 aa). Residue cysteine 59 is the Nucleophile of the active site. The Proton acceptor role is filled by histidine 302.

Belongs to the peptidase C19 family.

It catalyses the reaction Thiol-dependent hydrolysis of ester, thioester, amide, peptide and isopeptide bonds formed by the C-terminal Gly of ubiquitin (a 76-residue protein attached to proteins as an intracellular targeting signal).. The polypeptide is Ubiquitin carboxyl-terminal hydrolase 11 (ubp11) (Schizosaccharomyces pombe (strain 972 / ATCC 24843) (Fission yeast)).